Here is a 293-residue protein sequence, read N- to C-terminus: MVVSLFSSRNVFYTLSLCLFAALYQPVMSRPAKFEDDFRIAWSDTHITQIDGGRAIQLKLDPSSGCGFASKKQYLFGRVSMKIKLIPGDSAGTVTAFYMNSDTDSVRDELDFEFLGNRSGQPYTVQTNVFAHGKGDREQRVNLWFDPSRDFHEYAISWNHLRIVFYVDNVPIRVYKNNEARKVPYPRFQPMGVYSTLWEADDWATRGGIEKINWSRAPFYAYYKDFDIEGCPVPGPADCPANSKNWWEGSAYHQLSPVEARSYRWVRVNHMVYDYCTDKSRFPVPPPECSAGI.

A signal peptide spans 1–29 (MVVSLFSSRNVFYTLSLCLFAALYQPVMS). Positions 30-223 (RPAKFEDDFR…WSRAPFYAYY (194 aa)) constitute a GH16 domain. Glutamate 109 acts as the Nucleophile in catalysis. The active-site Proton donor is the glutamate 113. Glutamate 113 lines the xyloglucan pocket. Residue asparagine 117 is glycosylated (N-linked (GlcNAc...) asparagine). Residues 126–128 (QTN), 136–138 (DRE), 202–203 (DW), and glycine 207 contribute to the xyloglucan site. The N-linked (GlcNAc...) asparagine glycan is linked to asparagine 213. 2 cysteine pairs are disulfide-bonded: cysteine 231–cysteine 239 and cysteine 276–cysteine 289. Residue arginine 281 participates in xyloglucan binding.

It belongs to the glycosyl hydrolase 16 family. XTH group 1 subfamily. Contains at least one intrachain disulfide bond essential for its enzymatic activity.

It is found in the secreted. Its subcellular location is the cell wall. It localises to the extracellular space. The protein resides in the apoplast. It catalyses the reaction breaks a beta-(1-&gt;4) bond in the backbone of a xyloglucan and transfers the xyloglucanyl segment on to O-4 of the non-reducing terminal glucose residue of an acceptor, which can be a xyloglucan or an oligosaccharide of xyloglucan.. In terms of biological role, catalyzes xyloglucan endohydrolysis (XEH) and/or endotransglycosylation (XET). Cleaves and religates xyloglucan polymers, an essential constituent of the primary cell wall, and thereby participates in cell wall construction of growing tissues. This Arabidopsis thaliana (Mouse-ear cress) protein is Probable xyloglucan endotransglucosylase/hydrolase protein 7 (XTH7).